A 187-amino-acid chain; its full sequence is UPF0669 protein C6orf120 homolog (187 aa).

Residues 1–23 (MVEYWKRNFFMVLVLQAFYLANC) form the signal peptide. Asn-47 is a glycosylation site (N-linked (GlcNAc...) asparagine).

This sequence belongs to the UPF0669 family.

The protein resides in the secreted. This Xenopus tropicalis (Western clawed frog) protein is UPF0669 protein C6orf120 homolog.